We begin with the raw amino-acid sequence, 479 residues long: Ribulose bisphosphate carboxylase large chain (479 aa).

A propeptide spanning residues 1–2 is cleaved from the precursor; sequence MS. Proline 3 is modified (N-acetylproline). Positions 123 and 173 each coordinate substrate. Catalysis depends on lysine 175, which acts as the Proton acceptor. Position 177 (lysine 177) interacts with substrate. Positions 201, 203, and 204 each coordinate Mg(2+). Position 201 is an N6-carboxylysine (lysine 201). Histidine 294 serves as the catalytic Proton acceptor. 3 residues coordinate substrate: arginine 295, histidine 327, and serine 379.

It belongs to the RuBisCO large chain family. Type I subfamily. In terms of assembly, heterohexadecamer of 8 large chains and 8 small chains; disulfide-linked. The disulfide link is formed within the large subunit homodimers. Requires Mg(2+) as cofactor. In terms of processing, the disulfide bond which can form in the large chain dimeric partners within the hexadecamer appears to be associated with oxidative stress and protein turnover.

The protein localises to the plastid. It is found in the chloroplast. The catalysed reaction is 2 (2R)-3-phosphoglycerate + 2 H(+) = D-ribulose 1,5-bisphosphate + CO2 + H2O. It catalyses the reaction D-ribulose 1,5-bisphosphate + O2 = 2-phosphoglycolate + (2R)-3-phosphoglycerate + 2 H(+). In terms of biological role, ruBisCO catalyzes two reactions: the carboxylation of D-ribulose 1,5-bisphosphate, the primary event in carbon dioxide fixation, as well as the oxidative fragmentation of the pentose substrate in the photorespiration process. Both reactions occur simultaneously and in competition at the same active site. In Hordeum vulgare (Barley), this protein is Ribulose bisphosphate carboxylase large chain.